The following is a 460-amino-acid chain: GTPase Der (460 aa).

2 EngA-type G domains span residues 2–164 (KKVI…DDEI) and 199–370 (IKVG…ANFT). GTP-binding positions include 8–15 (GRPNVGKS), 55–59 (DSGGL), 116–119 (NKID), 205–212 (GRVNVGKS), 252–256 (DTAGI), and 316–319 (NKWD). One can recognise a KH-like domain in the interval 371–454 (QKIATSKLND…PVILLPRKRG (84 aa)).

The protein belongs to the TRAFAC class TrmE-Era-EngA-EngB-Septin-like GTPase superfamily. EngA (Der) GTPase family. In terms of assembly, associates with the 50S ribosomal subunit.

In terms of biological role, GTPase that plays an essential role in the late steps of ribosome biogenesis. This Campylobacter hominis (strain ATCC BAA-381 / DSM 21671 / CCUG 45161 / LMG 19568 / NCTC 13146 / CH001A) protein is GTPase Der.